The following is a 579-amino-acid chain: MTSVAEGLFKSLPKPKYTGEDEEVPQHAQPRGPRIVGADQIDQSQIVLRRTGPPPYGNRAGWRPRAAEDFGDGGAFPEILVAQYPLDMGRKGTATTSNALAVQVDAEGKVKYDAIARRGHSENRIVHASFKDLIPLRQRVDMGEISLDRPSEEEVQAQMEKTKNALASLVEGAVAAQKPKNVKGGRRAEPTFVRYTPANQMGDTTRKNDRIMKIVERQQDPMEPPKFKHKKIPRGPPSPPPPIMHSPPRKLTAEDQEAWRIPPPVSNWKNPKGYTVPLDKRLAADGRGLQDVTINDKFAQFAEALFTADRHAREEVRLRAQMQQKLAEKEKAQKEEHLRALAQKAREERAASNRRDSRARSHTRSASRSPSAYSRSATPSDDEEAARERERIRRERRQDAERQLRQSRMGTERRIQMMAREQNRDISEKVALGLAKPTQTSESMWDSRLFNQTSGLQSGFNEDNPYDKPLFAAQDAINSIYRPRAQLDVDDEEGAEGEMSKIQKTNRFEVLGKAKEGFRGAAEAEARDGPVQFEKDTTDPFGIDSMIADVTGGAGQKRYGIQEVEREDRGSKRARVDDD.

Disordered stretches follow at residues 1–64 (MTSV…GWRP), 218–254 (QQDP…LTAE), 343–414 (QKAR…TERR), and 521–579 (AAEA…VDDD). The span at 234–245 (RGPPSPPPPIMH) shows a compositional bias: pro residues. Over residues 343-359 (QKAREERAASNRRDSRA) the composition is skewed to basic and acidic residues. Positions 366–379 (ASRSPSAYSRSATP) are enriched in low complexity. Composition is skewed to basic and acidic residues over residues 386-414 (ARER…TERR), 521-538 (AAEA…KDTT), and 563-579 (EVER…VDDD).

This sequence belongs to the SNW family. As to quaternary structure, associated with the spliceosome.

It localises to the nucleus. In terms of biological role, involved in pre-mRNA splicing. The chain is Pre-mRNA-processing protein 45 (prp45) from Aspergillus fumigatus (strain ATCC MYA-4609 / CBS 101355 / FGSC A1100 / Af293) (Neosartorya fumigata).